Reading from the N-terminus, the 247-residue chain is Small ribosomal subunit protein uS3 (247 aa).

The region spanning 39–109 (IRSMIRSFPE…KVQIKVKEIK (71 aa)) is the KH type-2 domain. Residues 224–247 (RSRRESGQKSDELVRDERTHAERG) are disordered. Basic and acidic residues predominate over residues 227-247 (RESGQKSDELVRDERTHAERG).

It belongs to the universal ribosomal protein uS3 family. In terms of assembly, part of the 30S ribosomal subunit. Forms a tight complex with proteins S10 and S14.

Functionally, binds the lower part of the 30S subunit head. Binds mRNA in the 70S ribosome, positioning it for translation. The chain is Small ribosomal subunit protein uS3 from Treponema pallidum (strain Nichols).